A 715-amino-acid chain; its full sequence is 1,4-alpha-glucan branching enzyme GlgB (715 aa).

The Nucleophile role is filled by aspartate 396. Residue glutamate 449 is the Proton donor of the active site.

This sequence belongs to the glycosyl hydrolase 13 family. GlgB subfamily. Monomer.

The enzyme catalyses Transfers a segment of a (1-&gt;4)-alpha-D-glucan chain to a primary hydroxy group in a similar glucan chain.. The protein operates within glycan biosynthesis; glycogen biosynthesis. In terms of biological role, catalyzes the formation of the alpha-1,6-glucosidic linkages in glycogen by scission of a 1,4-alpha-linked oligosaccharide from growing alpha-1,4-glucan chains and the subsequent attachment of the oligosaccharide to the alpha-1,6 position. This Vibrio vulnificus (strain YJ016) protein is 1,4-alpha-glucan branching enzyme GlgB.